A 311-amino-acid chain; its full sequence is Probable manganese-dependent inorganic pyrophosphatase (311 aa).

H9, D13, D15, D77, H99, and D151 together coordinate Mn(2+).

Belongs to the PPase class C family. It depends on Mn(2+) as a cofactor.

Its subcellular location is the cytoplasm. The enzyme catalyses diphosphate + H2O = 2 phosphate + H(+). This chain is Probable manganese-dependent inorganic pyrophosphatase, found in Streptococcus agalactiae serotype Ia (strain ATCC 27591 / A909 / CDC SS700).